A 161-amino-acid polypeptide reads, in one-letter code: Cap-associated protein CAF20 (161 aa).

Basic residues predominate over residues 52–72 (HFGRRRSSHHHGRPKIKHNKP). The segment at 52–108 (HFGRRRSSHHHGRPKIKHNKPKVTTDSDGWCTFEAKKKGSGEDDEEETETTPTSTVP) is disordered. Phosphoserine is present on residues Ser-78 and Ser-91. Thr-99, Thr-101, and Thr-102 each carry phosphothreonine. Position 154 is a phosphoserine (Ser-154).

The protein belongs to the CAF20 family. As to quaternary structure, interacts with TIF45. In terms of processing, phosphorylated by casein kinase II complex (CK2).

The protein localises to the cytoplasm. Acts as an inhibitor of cap-dependent translation. Competes with eIF4G1/TIF4631 and EAP1 for binding to eIF4E/TIF45 and interferes with the formation of the eIF4F complex, inhibiting translation and stabilizing mRNA. Binding affinity for eIF4E/TIF45 is 10-fold less than that of eIF4G1/TIF4631. Required for induction of pseudohyphal growth in response to nitrogen limitation, probably by regulating STE12 translation. The chain is Cap-associated protein CAF20 (CAF20) from Saccharomyces cerevisiae (strain ATCC 204508 / S288c) (Baker's yeast).